Consider the following 274-residue polypeptide: Large ribosomal subunit protein uL2 (274 aa).

Disordered stretches follow at residues lysine 37–lysine 59 and glycine 222–lysine 262. The segment covering threonine 50–lysine 59 has biased composition (basic residues).

It belongs to the universal ribosomal protein uL2 family. Part of the 50S ribosomal subunit. Forms a bridge to the 30S subunit in the 70S ribosome.

In terms of biological role, one of the primary rRNA binding proteins. Required for association of the 30S and 50S subunits to form the 70S ribosome, for tRNA binding and peptide bond formation. It has been suggested to have peptidyltransferase activity; this is somewhat controversial. Makes several contacts with the 16S rRNA in the 70S ribosome. In Alcanivorax borkumensis (strain ATCC 700651 / DSM 11573 / NCIMB 13689 / SK2), this protein is Large ribosomal subunit protein uL2.